Reading from the N-terminus, the 57-residue chain is Protein GnsB (57 aa).

This sequence belongs to the gns family.

Overexpression increases levels of unsaturated fatty acids and suppresses both the temperature-sensitive fabA6 mutation and cold-sensitive secG null mutation. This Escherichia coli (strain K12) protein is Protein GnsB (gnsB).